Here is a 91-residue protein sequence, read N- to C-terminus: Lactococcin-B immunity protein (91 aa).

Its function is as follows. Imparts immunity to lactococcin-B to naturally sensitive host strains. This chain is Lactococcin-B immunity protein (lciB), found in Lactococcus lactis subsp. cremoris (Streptococcus cremoris).